A 210-amino-acid chain; its full sequence is Putative truncated L-serine dehydratase SDL1 (210 aa).

The protein belongs to the serine/threonine dehydratase family. Requires pyridoxal 5'-phosphate as cofactor.

It localises to the cytoplasm. The enzyme catalyses L-serine = pyruvate + NH4(+). The protein operates within carbohydrate biosynthesis; gluconeogenesis. The chain is Putative truncated L-serine dehydratase SDL1 (SDL1) from Saccharomyces cerevisiae (strain ATCC 204508 / S288c) (Baker's yeast).